The primary structure comprises 294 residues: Phosphoribosylaminoimidazole-succinocarboxamide synthase (294 aa).

Belongs to the SAICAR synthetase family.

It carries out the reaction 5-amino-1-(5-phospho-D-ribosyl)imidazole-4-carboxylate + L-aspartate + ATP = (2S)-2-[5-amino-1-(5-phospho-beta-D-ribosyl)imidazole-4-carboxamido]succinate + ADP + phosphate + 2 H(+). Its pathway is purine metabolism; IMP biosynthesis via de novo pathway; 5-amino-1-(5-phospho-D-ribosyl)imidazole-4-carboxamide from 5-amino-1-(5-phospho-D-ribosyl)imidazole-4-carboxylate: step 1/2. In Thermoplasma acidophilum (strain ATCC 25905 / DSM 1728 / JCM 9062 / NBRC 15155 / AMRC-C165), this protein is Phosphoribosylaminoimidazole-succinocarboxamide synthase.